We begin with the raw amino-acid sequence, 338 residues long: Aspartate--ammonia ligase (338 aa).

Belongs to the class-II aminoacyl-tRNA synthetase family. AsnA subfamily.

The protein resides in the cytoplasm. The catalysed reaction is L-aspartate + NH4(+) + ATP = L-asparagine + AMP + diphosphate + H(+). Its pathway is amino-acid biosynthesis; L-asparagine biosynthesis; L-asparagine from L-aspartate (ammonia route): step 1/1. The chain is Aspartate--ammonia ligase from Lactobacillus delbrueckii subsp. bulgaricus (strain ATCC 11842 / DSM 20081 / BCRC 10696 / JCM 1002 / NBRC 13953 / NCIMB 11778 / NCTC 12712 / WDCM 00102 / Lb 14).